The following is a 370-amino-acid chain: Uroporphyrinogen decarboxylase (370 aa).

Residues 29–33, Asp79, Tyr155, Ser210, and His342 contribute to the substrate site; that span reads RQAGR.

Belongs to the uroporphyrinogen decarboxylase family. Homodimer.

The protein localises to the cytoplasm. It catalyses the reaction uroporphyrinogen III + 4 H(+) = coproporphyrinogen III + 4 CO2. The protein operates within porphyrin-containing compound metabolism; protoporphyrin-IX biosynthesis; coproporphyrinogen-III from 5-aminolevulinate: step 4/4. Functionally, catalyzes the decarboxylation of four acetate groups of uroporphyrinogen-III to yield coproporphyrinogen-III. The chain is Uroporphyrinogen decarboxylase from Verminephrobacter eiseniae (strain EF01-2).